Here is a 106-residue protein sequence, read N- to C-terminus: N(2)-fixation sustaining protein CowN (106 aa).

This sequence belongs to the CowN family.

In terms of biological role, is required to sustain N(2)-dependent growth in the presence of low levels of carbon monoxide (CO). Probably acts by protecting the N(2) fixation ability of the nitrogenase complex, which is inactivated in the presence of CO. The protein is N(2)-fixation sustaining protein CowN of Denitrovibrio acetiphilus (strain DSM 12809 / NBRC 114555 / N2460).